We begin with the raw amino-acid sequence, 367 residues long: MADGFATAPQDFKGVFTPEIEAQTAPVWEKVKHHVTPMEWRVQAPLIVEINRLKREKNAAILAHNYMTPDIFHGVGDFVGDSLALAKEAAKSDAQIIVQAGVHFMAETSKVLSPEKKILIPDLKAGCSLASSITGADVRLIKQRYPGVPVVTYVNTTADVKAETDICCTSANAVQVVEWAAKEWGTDKVILIPDEFLARNVARQTDVKIIAWAGHCEVHKRFTAQDIADMRAAWPGAEVLAHPECPAEILEAADFAGSTAAMNDYVAAKKPAQVVLITECSMASNVQAESPATQFIGPCNMCPHMKRITLQNIYDALVHEQYEVTVDAEVLDRARLAVQRMIDLPPPAVPARYDLVKARHHVDVELI.

The iminosuccinate site is built by His-64 and Ser-82. Cys-127 contributes to the [4Fe-4S] cluster binding site. Residues 153–155 (YVN) and Ser-170 contribute to the iminosuccinate site. Position 216 (Cys-216) interacts with [4Fe-4S] cluster. Iminosuccinate is bound by residues 242–244 (HPE) and Thr-259. Residue Cys-302 participates in [4Fe-4S] cluster binding.

This sequence belongs to the quinolinate synthase family. Type 2 subfamily. Requires [4Fe-4S] cluster as cofactor.

The protein localises to the cytoplasm. The enzyme catalyses iminosuccinate + dihydroxyacetone phosphate = quinolinate + phosphate + 2 H2O + H(+). The protein operates within cofactor biosynthesis; NAD(+) biosynthesis; quinolinate from iminoaspartate: step 1/1. Its function is as follows. Catalyzes the condensation of iminoaspartate with dihydroxyacetone phosphate to form quinolinate. The sequence is that of Quinolinate synthase from Caulobacter vibrioides (strain ATCC 19089 / CIP 103742 / CB 15) (Caulobacter crescentus).